Here is a 296-residue protein sequence, read N- to C-terminus: tRNA dimethylallyltransferase (296 aa).

11 to 18 lines the ATP pocket; it reads GPTAVGKT. 13-18 serves as a coordination point for substrate; sequence TAVGKT. Residues 36 to 39 are interaction with substrate tRNA; sequence DSQQ.

It belongs to the IPP transferase family. In terms of assembly, monomer. The cofactor is Mg(2+).

The catalysed reaction is adenosine(37) in tRNA + dimethylallyl diphosphate = N(6)-dimethylallyladenosine(37) in tRNA + diphosphate. Its function is as follows. Catalyzes the transfer of a dimethylallyl group onto the adenine at position 37 in tRNAs that read codons beginning with uridine, leading to the formation of N6-(dimethylallyl)adenosine (i(6)A). This is tRNA dimethylallyltransferase from Streptococcus equi subsp. zooepidemicus (strain H70).